The following is a 598-amino-acid chain: Transcription factor himD (598 aa).

The segment at residues 18–47 is a DNA-binding region (zn(2)-C6 fungal-type); that stretch reads CQNCARAKIRCIRSVPTGSCDRCERLRKTC. The disordered stretch occupies residues 87–110; the sequence is TVSEASIDDKSPTTTPTTPRPPPD.

It is found in the nucleus. Functionally, transcription factor that, with himB, probably co-regulates the him gene cluster that mediates the biosynthesis of himeic acid A, a ubiquitin-activating enzyme (E1) inhibitor. The polypeptide is Transcription factor himD (Aspergillus japonicus).